The chain runs to 903 residues: Protein translocase subunit SecA (903 aa).

ATP-binding positions include Gln-87, 105-109 (GEGKT), and Asp-507. The tract at residues 854 to 893 (STMADSSGDVKSSTAESKAPYVRDGRKVGRNEPCPCGSGK) is disordered. The span at 856–869 (MADSSGDVKSSTAE) shows a compositional bias: polar residues. Residues 874 to 883 (YVRDGRKVGR) are compositionally biased toward basic and acidic residues. Cys-887, Cys-889, Cys-898, and His-899 together coordinate Zn(2+).

This sequence belongs to the SecA family. In terms of assembly, monomer and homodimer. Part of the essential Sec protein translocation apparatus which comprises SecA, SecYEG and auxiliary proteins SecDF-YajC and YidC. Requires Zn(2+) as cofactor.

The protein resides in the cell inner membrane. It localises to the cytoplasm. The enzyme catalyses ATP + H2O + cellular proteinSide 1 = ADP + phosphate + cellular proteinSide 2.. In terms of biological role, part of the Sec protein translocase complex. Interacts with the SecYEG preprotein conducting channel. Has a central role in coupling the hydrolysis of ATP to the transfer of proteins into and across the cell membrane, serving both as a receptor for the preprotein-SecB complex and as an ATP-driven molecular motor driving the stepwise translocation of polypeptide chains across the membrane. The polypeptide is Protein translocase subunit SecA (Nitrosococcus oceani (strain ATCC 19707 / BCRC 17464 / JCM 30415 / NCIMB 11848 / C-107)).